A 555-amino-acid chain; its full sequence is Hydroxylamine reductase (555 aa).

Positions 5, 8, 17, and 23 each coordinate [4Fe-4S] cluster. 8 residues coordinate hybrid [4Fe-2O-2S] cluster: His248, Glu272, Cys316, Cys408, Cys436, Cys461, Glu496, and Lys498. Residue Cys408 is modified to Cysteine persulfide.

Belongs to the HCP family. [4Fe-4S] cluster serves as cofactor. Requires hybrid [4Fe-2O-2S] cluster as cofactor.

Its subcellular location is the cytoplasm. It carries out the reaction A + NH4(+) + H2O = hydroxylamine + AH2 + H(+). Catalyzes the reduction of hydroxylamine to form NH(3) and H(2)O. This Halothermothrix orenii (strain H 168 / OCM 544 / DSM 9562) protein is Hydroxylamine reductase.